We begin with the raw amino-acid sequence, 362 residues long: Ribosome-binding ATPase YchF (362 aa).

The OBG-type G domain occupies 3–255 (FKCGIIGLPN…MSDEEKKSFM (253 aa)). 12–17 (NVGKST) serves as a coordination point for ATP. Residues Ser16 and Thr36 each coordinate Mg(2+). The region spanning 277–360 (NLITFFTVGD…QDGDIIHFLF (84 aa)) is the TGS domain.

The protein belongs to the TRAFAC class OBG-HflX-like GTPase superfamily. OBG GTPase family. YchF/OLA1 subfamily. Mg(2+) serves as cofactor.

ATPase that binds to both the 70S ribosome and the 50S ribosomal subunit in a nucleotide-independent manner. The sequence is that of Ribosome-binding ATPase YchF from Buchnera aphidicola subsp. Acyrthosiphon pisum (strain APS) (Acyrthosiphon pisum symbiotic bacterium).